The following is a 227-amino-acid chain: Large ribosomal subunit protein uL3 (227 aa).

N5-methylglutamine is present on Gln-151.

The protein belongs to the universal ribosomal protein uL3 family. Part of the 50S ribosomal subunit. Forms a cluster with proteins L14 and L19. Methylated by PrmB.

One of the primary rRNA binding proteins, it binds directly near the 3'-end of the 23S rRNA, where it nucleates assembly of the 50S subunit. The protein is Large ribosomal subunit protein uL3 of Gluconobacter oxydans (strain 621H) (Gluconobacter suboxydans).